The following is a 1733-amino-acid chain: Serine-aspartate repeat-containing protein F (1733 aa).

Positions 1–45 (MKKRRQGPINKRVDFLSNKVNKYSIRKFTVGTASILVGATLMFGA) are cleaved as a signal peptide. Positions 46-678 (ADNEAKAAED…GSSTAQGDNP (633 aa)) are ligand binding A region. Disordered regions lie at residues 51-269 (KAAE…SVND) and 332-351 (PLAL…ASPR). Residues 61–74 (ASKEEQKGSRDNEN) show a composition bias toward basic and acidic residues. Polar residues-rich tracts occupy residues 85–99 (GSHS…NNAT) and 146–168 (PKTS…DNLN). The segment covering 175–184 (KESKTDEHST) has biased composition (basic and acidic residues). Over residues 186-226 (QAQMSTNKSNLDTNDSPTQSEKTSSQANNDSTDNQSAPSKQ) the composition is skewed to polar residues. Basic and acidic residues predominate over residues 227–253 (LDSKPSEQKVYKTKFNDEPTQDVEHTT). 2 stretches are compositionally biased toward polar residues: residues 255–266 (KLKTPSVSTDSS) and 336–346 (NRSQSKNSPHK). CNA-B domains follow at residues 679–797 (TYSL…YLTP), 798–907 (KYNV…FYKP), 908–1018 (TYNL…YKTP), and 1019–1129 (KYSV…FDDD). The segment at 679–1129 (TYSLGDYVWL…SIDNGYFDDD (451 aa)) is type I collagen binding region. The disordered stretch occupies residues 862 to 890 (FETPEGYTPTKQNSGSDEGKDSNGTKTTV). Residues 1085–1708 (KPEGMTQTTA…ANEDHDSKGT (624 aa)) are disordered. Residues 1107–1119 (EDVRVTITDHDDF) are compositionally biased toward basic and acidic residues. Acidic residues predominate over residues 1125 to 1684 (YFDDDSDSDS…DSDSDSDSDS (560 aa)). Residues 1685–1706 (DSDKNAKDKLPDTGANEDHDSK) are compositionally biased toward basic and acidic residues. The LPXTG sorting signal signature appears at 1694–1698 (LPDTG). T1697 carries the post-translational modification Pentaglycyl murein peptidoglycan amidated threonine. A propeptide spans 1698–1733 (GANEDHDSKGTLLGTLFAGLGALLLGRRRKKDNKEK) (removed by sortase).

It belongs to the serine-aspartate repeat-containing protein (SDr) family.

The protein resides in the secreted. It localises to the cell wall. In terms of biological role, binds to type I collagen via alpha-2(I) or alpha-1(I) chains, although its affinity for the alpha-1(I) chain is significantly higher. Involved in bacterial adherence to transcutaneous drivelines from explanted ventricular assist devices. This Staphylococcus epidermidis protein is Serine-aspartate repeat-containing protein F (sdrF).